A 158-amino-acid polypeptide reads, in one-letter code: MHEGVQVSSKLEQLQDLLAPVVVALGYQCWGIDFSSQGKHSVLRIYIDKEGGVLVDDCAIVSRQISGVLDVEDPISTEYTLEVSSPGMERPLFTIEQFASYAGEQVKIKLRSPFEGRRNFQGLLRGVEEQDVVVQVEDHEFLLPIDMIDKANIIPTFD.

It belongs to the RimP family.

Its subcellular location is the cytoplasm. Functionally, required for maturation of 30S ribosomal subunits. The protein is Ribosome maturation factor RimP of Pseudomonas savastanoi pv. phaseolicola (strain 1448A / Race 6) (Pseudomonas syringae pv. phaseolicola (strain 1448A / Race 6)).